Reading from the N-terminus, the 277-residue chain is Large ribosomal subunit protein uL15c (277 aa).

A chloroplast-targeting transit peptide spans 1 to 67 (MATPLSISSN…FARPLVVVSQ (67 aa)). Threonine 68 carries the post-translational modification N-acetylthreonine. Residues 81–125 (FRLDNLGPQPGSRKKQKRKGRGISAGQGASCGFGMRGQKSRSGPG) are disordered. Positions 92–101 (SRKKQKRKGR) are enriched in basic residues. Gly residues predominate over residues 103-115 (ISAGQGASCGFGM).

The protein belongs to the universal ribosomal protein uL15 family. As to quaternary structure, part of the 50S ribosomal subunit.

It is found in the plastid. The protein localises to the chloroplast. This Arabidopsis thaliana (Mouse-ear cress) protein is Large ribosomal subunit protein uL15c (RPL15).